The sequence spans 332 residues: Isopentenyl phosphate kinase (332 aa).

An N-acetylmethionine modification is found at Met1. Residue 18–22 (KLGGA) coordinates ATP. Substrate is bound at residue Ala96. Gly97 provides a ligand contact to ATP. Residues His101 and Gly202 each contribute to the substrate site. ATP is bound by residues Asp223, 228-233 (YDRPPS), Gly279, and Lys283.

This sequence belongs to the isopentenyl phosphate kinase family.

It is found in the cytoplasm. It localises to the cytosol. The catalysed reaction is isopentenyl phosphate + ATP = isopentenyl diphosphate + ADP. In terms of biological role, catalyzes the formation of isopentenyl diphosphate (IPP), the universal five-carbon isoprenoid building block of all natural isoprenoids. Acts in parallel with the mevalonate (MVA) pathway and plays an important role in regulating the formation of both MVA and methylerythritol phosphate (MEP) pathway-derived terpenoid compounds by controlling the ratio of isopentenyl phosphate (IP) and dimethylallyl phosphate (DMAP) to isopentenyl diphosphate (IPP) and dimethylallyl diphosphate (DMAPP). Controls the levels of IP and DMAP that are competitive inhibitors of the farnesyl diphosphate synthase. Regulates the production of farnesyl diphosphate-derived terpenoids in the cytosol, and geranyl diphosphate-derived compounds in plastids. The chain is Isopentenyl phosphate kinase from Arabidopsis thaliana (Mouse-ear cress).